Reading from the N-terminus, the 270-residue chain is UPF0354 protein BCG9842_B0431 (270 aa).

It belongs to the UPF0354 family.

This is UPF0354 protein BCG9842_B0431 from Bacillus cereus (strain G9842).